Here is a 336-residue protein sequence, read N- to C-terminus: G patch domain and ankyrin repeat-containing protein 1 homolog (336 aa).

ANK repeat units follow at residues 123–152 (FGWT…QVET) and 156–185 (SGNT…LEET). The region spanning 240-286 (AKNRGLQLMVKQGWDQEHGLGPSQSGRLYPVKTVLRKQRTGLGIEQQ) is the G-patch domain.

This chain is G patch domain and ankyrin repeat-containing protein 1 homolog, found in Drosophila melanogaster (Fruit fly).